The primary structure comprises 601 residues: uncharacterized protein (601 aa).

A disordered region spans residues serine 127–histidine 364. Polar residues predominate over residues serine 128–aspartate 137. Residues arginine 141–serine 154 show a composition bias toward low complexity. 3 stretches are compositionally biased toward polar residues: residues threonine 159–arginine 177, alanine 199–proline 213, and serine 232–glutamine 250. Phosphoserine occurs at positions 247 and 281. The span at serine 265–serine 281 shows a compositional bias: low complexity. 2 stretches are compositionally biased toward basic and acidic residues: residues aspartate 286–lysine 296 and glycine 313–alanine 325. Serine 335 bears the Phosphoserine mark. The segment covering aspartate 338–alanine 356 has biased composition (polar residues).

This is an uncharacterized protein from Schizosaccharomyces pombe (strain 972 / ATCC 24843) (Fission yeast).